Here is a 206-residue protein sequence, read N- to C-terminus: Protein GET1 (206 aa).

The Lumenal segment spans residues 1–4; the sequence is MPSL. The helical transmembrane segment at 5-24 threads the bilayer; it reads LITALFLNVIIYVINTVGAA. The Cytoplasmic segment spans residues 25–110; it reads TVDGLLWLLY…TFDITIKIAR (86 aa). The stretch at 75-100 forms a coiled coil; the sequence is AKLRRRHDKALEAYEAKNNELTQSKS. The helical transmembrane segment at 111 to 131 threads the bilayer; the sequence is WAATSGLMLFLQFWYSKTPIF. At 132–155 the chain is on the lumenal side; it reads TLPPGWIPWQVQWVLSFPRAPMGT. A helical membrane pass occupies residues 156–172; that stretch reads VSIQIWSGACATVVALV. Over 173–206 the chain is Cytoplasmic; it reads GDAMKASLAYVSKPKIDRIKLGATMEGKEGKKRQ.

The protein belongs to the WRB/GET1 family. In terms of assembly, interacts with GET3.

It localises to the endoplasmic reticulum membrane. Functionally, required for the post-translational delivery of tail-anchored (TA) proteins to the endoplasmic reticulum. Acts as a membrane receptor for soluble GET3, which recognizes and selectively binds the transmembrane domain of TA proteins in the cytosol. The protein is Protein GET1 of Ajellomyces capsulatus (strain H143) (Darling's disease fungus).